A 176-amino-acid polypeptide reads, in one-letter code: NAD(P)H-quinone oxidoreductase subunit 6, chloroplastic (176 aa).

Transmembrane regions (helical) follow at residues 10-30 (ILVL…VLLT), 33-53 (IYSA…YFLL), 60-80 (VAQL…AVMF), 95-115 (IGDG…MTTI), and 152-172 (FYLP…GAIT).

The protein belongs to the complex I subunit 6 family. In terms of assembly, NDH is composed of at least 16 different subunits, 5 of which are encoded in the nucleus.

It localises to the plastid. Its subcellular location is the chloroplast thylakoid membrane. It carries out the reaction a plastoquinone + NADH + (n+1) H(+)(in) = a plastoquinol + NAD(+) + n H(+)(out). The enzyme catalyses a plastoquinone + NADPH + (n+1) H(+)(in) = a plastoquinol + NADP(+) + n H(+)(out). Its function is as follows. NDH shuttles electrons from NAD(P)H:plastoquinone, via FMN and iron-sulfur (Fe-S) centers, to quinones in the photosynthetic chain and possibly in a chloroplast respiratory chain. The immediate electron acceptor for the enzyme in this species is believed to be plastoquinone. Couples the redox reaction to proton translocation, and thus conserves the redox energy in a proton gradient. This Zea mays (Maize) protein is NAD(P)H-quinone oxidoreductase subunit 6, chloroplastic (ndhG).